An 864-amino-acid polypeptide reads, in one-letter code: Leucine--tRNA ligase (864 aa).

Residues 42–52 (PYPSGKLHMGH) carry the 'HIGH' region motif. A 'KMSKS' region motif is present at residues 624–628 (KMSKS). Lys627 contacts ATP.

It belongs to the class-I aminoacyl-tRNA synthetase family.

It is found in the cytoplasm. The catalysed reaction is tRNA(Leu) + L-leucine + ATP = L-leucyl-tRNA(Leu) + AMP + diphosphate. The chain is Leucine--tRNA ligase from Burkholderia thailandensis (strain ATCC 700388 / DSM 13276 / CCUG 48851 / CIP 106301 / E264).